The sequence spans 347 residues: Ferrochelatase (347 aa).

Residues H193 and E273 each coordinate Fe cation.

The protein belongs to the ferrochelatase family.

The protein resides in the cytoplasm. The enzyme catalyses heme b + 2 H(+) = protoporphyrin IX + Fe(2+). It participates in porphyrin-containing compound metabolism; protoheme biosynthesis; protoheme from protoporphyrin-IX: step 1/1. Functionally, catalyzes the ferrous insertion into protoporphyrin IX. This is Ferrochelatase from Rickettsia canadensis (strain McKiel).